Consider the following 1079-residue polypeptide: Electrogenic sodium bicarbonate cotransporter 1 (1079 aa).

The tract at residues 1–62 is required for interaction with AHCYL1; it reads MEDEAVLDRG…EKKEKERISE (62 aa). The Cytoplasmic portion of the chain corresponds to 1–466; the sequence is MEDEAVLDRG…FASDFYDALN (466 aa). Phosphoserine is present on E21. Phosphotyrosine is present on Y30. Positions 39 to 52 are enriched in basic residues; sequence YRRRRRHKRKAGHK. Residues 39–78 form a disordered region; sequence YRRRRRHKRKAGHKEKKEKERISENYSDKSDVENADESSS. Residues 53–70 are compositionally biased toward basic and acidic residues; the sequence is EKKEKERISENYSDKSDV. Phosphoserine is present on residues S61, S65, S68, S223, S232, S233, and S245. The interval 235 to 266 is disordered; it reads SRMFSNPDNGSPAMTHRNLTSSSLNDISDKPE. Phosphothreonine occurs at positions 249 and 254. Residues 251-260 are compositionally biased toward polar residues; sequence RNLTSSSLND. S256, S257, and S262 each carry phosphoserine. A helical transmembrane segment spans residues 467–491; that stretch reads IQALSAILFIYLATVTNAITFGGLL. Residues 492-501 are Extracellular-facing; the sequence is GDATDNMQGV. A helical transmembrane segment spans residues 502 to 520; the sequence is LESFLGTAVSGAIFCLFAG. A topological domain (cytoplasmic) is located at residue Q521. Residues 522 to 542 form a discontinuously helical membrane-spanning segment; that stretch reads PLTILSSTGPVLVFERLLFNF. Residues 543 to 550 lie on the Extracellular side of the membrane; it reads SKDHNFDY. The helical transmembrane segment at 551-571 threads the bilayer; sequence LEFRLWIGLWSAFMCLVLVAT. Topologically, residues 572 to 585 are cytoplasmic; sequence DASFLVQYFTRFTE. A helical transmembrane segment spans residues 586 to 609; it reads EGFSSLISFIFIYDAFKKMIKLAD. The Extracellular portion of the chain corresponds to 610–692; it reads YYPINSDFKV…GNNCDFVPDI (83 aa). A helical transmembrane segment spans residues 693-710; sequence TLMSFILFLGTYTSSMAM. Topologically, residues 711–725 are cytoplasmic; the sequence is KKFKTSRYFPTTARK. The chain crosses the membrane as a helical span at residues 726-745; it reads LISDFAIILSILIFCVIDAL. The Extracellular portion of the chain corresponds to 746–779; it reads VGVDTPKLIVPSEFKPTSPNRGWFVPPFGGNPWW. An interaction with CA4 region spans residues 748–779; that stretch reads VDTPKLIVPSEFKPTSPNRGWFVPPFGGNPWW. A helical membrane pass occupies residues 780–807; that stretch reads VCLAAAIPALLVTILIFMDQQITAVIVN. The Cytoplasmic portion of the chain corresponds to 808-819; sequence RKEHKLKKGAGY. Residues 820–836 traverse the membrane as a helical segment; sequence HLDLFWVAILMVVCSFM. Position 837 (A837) is a topological domain, extracellular. Residues 838-855 form a discontinuously helical membrane-spanning segment; sequence LPWYVAATVISIAHIDSL. At 856 to 877 the chain is on the cytoplasmic side; it reads KMETETSAPGEQPKFLGVREQR. A helical membrane pass occupies residues 878–894; the sequence is VTGTLVFILTGLSVFMA. Topologically, residues 895-901 are extracellular; the sequence is PILKFIP. A helical transmembrane segment spans residues 902–918; sequence MPVLYGVFLYMGVASLN. The Cytoplasmic portion of the chain corresponds to 919 to 960; the sequence is GVQFMDRLKLLLMPLKHQPDFIYLRHVPLRRVHLFTFLQVLC. The segment at residues 961 to 986 is an intramembrane region (discontinuously helical); that stretch reads LALLWILKSTVAAIIFPVMILALVAV. Residues 987 to 1079 are Cytoplasmic-facing; that stretch reads RKGMDYLFSQ…STFLERHTSC (93 aa). The segment at 1002–1004 is CA2-binding; that stretch reads LDD. The disordered stretch occupies residues 1012-1079; it reads KKKEDEKKKK…STFLERHTSC (68 aa). S1026 and S1029 each carry phosphoserine. Residues 1030–1033 form a CA2-binding region; it reads DNDD. 2 positions are modified to phosphoserine: S1034 and S1044. Residues 1057 to 1059 form a required for basolateral targeting region; sequence FLS. The span at 1062-1079 shows a compositional bias: basic and acidic residues; that stretch reads KPLDRERSSTFLERHTSC. Phosphoserine is present on S1069.

Belongs to the anion exchanger (TC 2.A.31) family. In terms of assembly, homodimer. Interacts with CA2/carbonic anhydrase 2 and CA4/carbonic anhydrase 4 which may regulate transporter activity. Isoform 1 but not isoform 2 interacts with AHCYL1 (via PEST domain when phosphorylated); the interaction increases SLC4A4 isoform 1 activity. Interacts with AHCYL2. In terms of processing, phosphorylation of Ser-1026 by PKA increases the binding of CA2 and changes the Na(+):HCO3(-) stoichiometry of the transporter from 3:1 to 2:1. Phosphorylated in presence of STK39 and dephosphorylated in presence of PP1 phosphatase; phosphorylation seems to inhibit SLC4A4 activity. N-glycosylated. May not be necessary for the transporter basic functions. In terms of tissue distribution, isoform 1 is specifically expressed in pancreatic ducts and acini. Also expressed in parotid acinar cells and in the colonic crypts.

The protein localises to the basolateral cell membrane. It localises to the cell membrane. The enzyme catalyses 2 hydrogencarbonate(out) + Na(+)(out) = 2 hydrogencarbonate(in) + Na(+)(in). It carries out the reaction 3 hydrogencarbonate(out) + Na(+)(out) = 3 hydrogencarbonate(in) + Na(+)(in). Activated by cyclic AMP. Its function is as follows. Electrogenic sodium/bicarbonate cotransporter with a Na(+):HCO3(-) stoichiometry varying from 1:2 to 1:3. May regulate bicarbonate influx/efflux at the basolateral membrane of cells and regulate intracellular pH. The protein is Electrogenic sodium bicarbonate cotransporter 1 (Slc4a4) of Mus musculus (Mouse).